The chain runs to 252 residues: Chitooligosaccharide deacetylase (252 aa).

Residues histidine 61 and histidine 125 each coordinate Mg(2+).

This sequence belongs to the YdjC deacetylase family. ChbG subfamily. Homodimer. It depends on Mg(2+) as a cofactor.

The protein resides in the cytoplasm. It catalyses the reaction N,N'-diacetylchitobiose + H2O = N-acetyl-beta-D-glucosaminyl-(1-&gt;4)-D-glucosamine + acetate. The enzyme catalyses diacetylchitobiose-6'-phosphate + H2O = N'-monoacetylchitobiose-6'-phosphate + acetate. Its pathway is glycan degradation; chitin degradation. Its function is as follows. Involved in the degradation of chitin. ChbG is essential for growth on the acetylated chitooligosaccharides chitobiose and chitotriose but is dispensable for growth on cellobiose and chitosan dimer, the deacetylated form of chitobiose. Deacetylation of chitobiose-6-P and chitotriose-6-P is necessary for both the activation of the chb promoter by the regulatory protein ChbR and the hydrolysis of phosphorylated beta-glucosides by the phospho-beta-glucosidase ChbF. Catalyzes the removal of only one acetyl group from chitobiose-6-P to yield monoacetylchitobiose-6-P, the inducer of ChbR and the substrate of ChbF. The protein is Chitooligosaccharide deacetylase of Salmonella newport (strain SL254).